The primary structure comprises 308 residues: Pantothenate kinase (308 aa).

An ATP-binding site is contributed by 93-100 (GSVAVGKS).

The protein belongs to the prokaryotic pantothenate kinase family.

The protein resides in the cytoplasm. The catalysed reaction is (R)-pantothenate + ATP = (R)-4'-phosphopantothenate + ADP + H(+). Its pathway is cofactor biosynthesis; coenzyme A biosynthesis; CoA from (R)-pantothenate: step 1/5. The chain is Pantothenate kinase from Corynebacterium aurimucosum (strain ATCC 700975 / DSM 44827 / CIP 107346 / CN-1) (Corynebacterium nigricans).